Consider the following 300-residue polypeptide: Probable amino-acid ABC transporter periplasmic-binding protein y4tE (300 aa).

Positions 1-27 (MTHLKISKTAPAVARFLPAGRIASVAA) are cleaved as a signal peptide.

This sequence belongs to the bacterial solute-binding protein 3 family.

Its subcellular location is the periplasm. In terms of biological role, probably part of the binding-protein-dependent transport system y4tEFGH for an amino acid. The chain is Probable amino-acid ABC transporter periplasmic-binding protein y4tE from Sinorhizobium fredii (strain NBRC 101917 / NGR234).